Here is a 353-residue protein sequence, read N- to C-terminus: MPSSRTCVGVVFGGASEEHAVSIRSAITVVGALRSEVNNNRFEVIAIYIDQRGRWWPAGVAEAVLKQGHPAKPEQLSTPLAPQGFTKLPEGSERVQVWYPVLHGPNGEDGTVQGLFTLMGQPFVGSGVLGSALSMDKLAMKAAFAAAGLPQVPYAAVDAADLLETESRQGVAKHLEAKLKYPCFVKPANLGSSVGISKAQNRNELLIGLDKAASLDRRIVVEQGVSARELECAVLGKRELQTSVVGEICFDADWYDYDTKYSENCSHTLIPAPLPEGVEAQIRTLALQACRCVAAHGMARVDFFYNAARNEIWLNEINTLPGFTSQSMYPMLWEASGVTLEELVSQLVITARE.

Residues 141-349 (KAAFAAAGLP…LEELVSQLVI (209 aa)) enclose the ATP-grasp domain. Residue 176 to 231 (EAKLKYPCFVKPANLGSSVGISKAQNRNELLIGLDKAASLDRRIVVEQGVSARELE) participates in ATP binding. Mg(2+)-binding residues include Asp-302, Glu-316, and Asn-318.

Belongs to the D-alanine--D-alanine ligase family. Mg(2+) serves as cofactor. It depends on Mn(2+) as a cofactor.

It localises to the cytoplasm. The enzyme catalyses 2 D-alanine + ATP = D-alanyl-D-alanine + ADP + phosphate + H(+). Its pathway is cell wall biogenesis; peptidoglycan biosynthesis. Its function is as follows. Cell wall formation. This is D-alanine--D-alanine ligase from Prochlorococcus marinus (strain MIT 9313).